We begin with the raw amino-acid sequence, 296 residues long: Probable GTP 3',8-cyclase (296 aa).

The Radical SAM core domain occupies 5–230 (EYGRVVTNLR…HRRTQYFTPK (226 aa)). Residue Arg-14 coordinates GTP. [4Fe-4S] cluster contacts are provided by Cys-21 and Cys-25. Tyr-27 contacts S-adenosyl-L-methionine. Cys-28 is a [4Fe-4S] cluster binding site. Lys-61 contacts GTP. An S-adenosyl-L-methionine-binding site is contributed by Gly-65. Thr-89 contributes to the GTP binding site. Ser-113 provides a ligand contact to S-adenosyl-L-methionine. Position 150 (Lys-150) interacts with GTP. The [4Fe-4S] cluster site is built by Cys-245 and Cys-248. 250-252 (RMR) provides a ligand contact to GTP. Cys-262 provides a ligand contact to [4Fe-4S] cluster.

It belongs to the radical SAM superfamily. MoaA family. [4Fe-4S] cluster serves as cofactor.

The catalysed reaction is GTP + AH2 + S-adenosyl-L-methionine = (8S)-3',8-cyclo-7,8-dihydroguanosine 5'-triphosphate + 5'-deoxyadenosine + L-methionine + A + H(+). Its pathway is cofactor biosynthesis; molybdopterin biosynthesis. Its function is as follows. Catalyzes the cyclization of GTP to (8S)-3',8-cyclo-7,8-dihydroguanosine 5'-triphosphate. The chain is Probable GTP 3',8-cyclase from Archaeoglobus fulgidus (strain ATCC 49558 / DSM 4304 / JCM 9628 / NBRC 100126 / VC-16).